A 46-amino-acid polypeptide reads, in one-letter code: GTP cyclohydrolase 1 (46 aa).

Position 7 (cysteine 7) interacts with Zn(2+).

It belongs to the GTP cyclohydrolase I family. As to quaternary structure, homomer.

The enzyme catalyses GTP + H2O = 7,8-dihydroneopterin 3'-triphosphate + formate + H(+). It functions in the pathway cofactor biosynthesis; 7,8-dihydroneopterin triphosphate biosynthesis; 7,8-dihydroneopterin triphosphate from GTP: step 1/1. The polypeptide is GTP cyclohydrolase 1 (folE) (Bacillus pumilus (Bacillus mesentericus)).